The following is a 512-amino-acid chain: ATP synthase subunit alpha (512 aa).

Position 170 to 177 (170 to 177 (GDRQTGKT)) interacts with ATP.

The protein belongs to the ATPase alpha/beta chains family. In terms of assembly, F-type ATPases have 2 components, CF(1) - the catalytic core - and CF(0) - the membrane proton channel. CF(1) has five subunits: alpha(3), beta(3), gamma(1), delta(1), epsilon(1). CF(0) has three main subunits: a(1), b(2) and c(9-12). The alpha and beta chains form an alternating ring which encloses part of the gamma chain. CF(1) is attached to CF(0) by a central stalk formed by the gamma and epsilon chains, while a peripheral stalk is formed by the delta and b chains.

It is found in the cell inner membrane. It carries out the reaction ATP + H2O + 4 H(+)(in) = ADP + phosphate + 5 H(+)(out). Its function is as follows. Produces ATP from ADP in the presence of a proton gradient across the membrane. The alpha chain is a regulatory subunit. The polypeptide is ATP synthase subunit alpha (Solibacter usitatus (strain Ellin6076)).